Consider the following 123-residue polypeptide: Small ribosomal subunit protein uS13 (123 aa).

The disordered stretch occupies residues 95–123 (GLPVRGQKTKTNARTRKGPKRAISGKKNK).

Belongs to the universal ribosomal protein uS13 family. Part of the 30S ribosomal subunit. Forms a loose heterodimer with protein S19. Forms two bridges to the 50S subunit in the 70S ribosome.

Located at the top of the head of the 30S subunit, it contacts several helices of the 16S rRNA. In the 70S ribosome it contacts the 23S rRNA (bridge B1a) and protein L5 of the 50S subunit (bridge B1b), connecting the 2 subunits; these bridges are implicated in subunit movement. Contacts the tRNAs in the A and P-sites. In Clostridium novyi (strain NT), this protein is Small ribosomal subunit protein uS13.